The primary structure comprises 268 residues: Tryptophan synthase alpha chain (268 aa).

Residues Glu-49 and Asp-60 each act as proton acceptor in the active site.

This sequence belongs to the TrpA family. As to quaternary structure, tetramer of two alpha and two beta chains.

It carries out the reaction (1S,2R)-1-C-(indol-3-yl)glycerol 3-phosphate + L-serine = D-glyceraldehyde 3-phosphate + L-tryptophan + H2O. It participates in amino-acid biosynthesis; L-tryptophan biosynthesis; L-tryptophan from chorismate: step 5/5. The alpha subunit is responsible for the aldol cleavage of indoleglycerol phosphate to indole and glyceraldehyde 3-phosphate. This is Tryptophan synthase alpha chain from Vibrio metschnikovii.